We begin with the raw amino-acid sequence, 41 residues long: Perlinhibin (41 aa).

Post-translationally, contains four disulfide bonds.

Functionally, binds to calcite crystals in the shell and inhibits further shell growth at the binding site. The polypeptide is Perlinhibin (Haliotis laevigata (Smooth Australian abalone)).